The primary structure comprises 314 residues: Ribosomal protein L11 methyltransferase (314 aa).

Residues Thr-163, Gly-184, Asp-206, and Asn-248 each coordinate S-adenosyl-L-methionine.

The protein belongs to the methyltransferase superfamily. PrmA family.

It is found in the cytoplasm. It catalyses the reaction L-lysyl-[protein] + 3 S-adenosyl-L-methionine = N(6),N(6),N(6)-trimethyl-L-lysyl-[protein] + 3 S-adenosyl-L-homocysteine + 3 H(+). Functionally, methylates ribosomal protein L11. The protein is Ribosomal protein L11 methyltransferase of Lactobacillus acidophilus (strain ATCC 700396 / NCK56 / N2 / NCFM).